The chain runs to 240 residues: Putative truncated effector protein hopW1-2 (240 aa).

The interval 1-32 (MSPAQIIRTSHSFPPSFTGTSSSAENSHAQSP) is disordered. The segment covering 9-23 (TSHSFPPSFTGTSSS) has biased composition (low complexity).

This sequence belongs to the HopW family.

This Pseudomonas syringae pv. maculicola protein is Putative truncated effector protein hopW1-2 (hopW1-2).